The sequence spans 214 residues: Adenylate kinase (214 aa).

10–15 contributes to the ATP binding site; that stretch reads GAGKGT. Residues 30 to 59 form an NMP region; it reads STGDMLRAAVKAGSELGLKAKEIMDAGKLV. AMP-binding positions include T31, R36, 57–59, 85–88, and Q92; these read KLV and GFPR. Positions 122-159 are LID; it reads GRRVHAASGRVYHVKFNPPKVEDKDDVTGEDLTIRKDD. Residues R123 and 132–133 each bind ATP; that span reads VY. Residues R156 and R167 each coordinate AMP. R200 is an ATP binding site.

Belongs to the adenylate kinase family. In terms of assembly, monomer.

It is found in the cytoplasm. It carries out the reaction AMP + ATP = 2 ADP. Its pathway is purine metabolism; AMP biosynthesis via salvage pathway; AMP from ADP: step 1/1. Its function is as follows. Catalyzes the reversible transfer of the terminal phosphate group between ATP and AMP. Plays an important role in cellular energy homeostasis and in adenine nucleotide metabolism. In Yersinia enterocolitica serotype O:8 / biotype 1B (strain NCTC 13174 / 8081), this protein is Adenylate kinase.